Here is a 307-residue protein sequence, read N- to C-terminus: tRNA pseudouridine synthase B (307 aa).

D48 serves as the catalytic Nucleophile.

The protein belongs to the pseudouridine synthase TruB family. Type 1 subfamily.

The enzyme catalyses uridine(55) in tRNA = pseudouridine(55) in tRNA. In terms of biological role, responsible for synthesis of pseudouridine from uracil-55 in the psi GC loop of transfer RNAs. The protein is tRNA pseudouridine synthase B of Neisseria meningitidis serogroup B (strain ATCC BAA-335 / MC58).